A 232-amino-acid chain; its full sequence is Probable intron-encoded endonuclease aI3 (232 aa).

Belongs to the LAGLIDADG endonuclease family.

It localises to the mitochondrion. Mitochondrial DNA endonuclease involved in intron homing. In Dictyostelium discoideum (Social amoeba), this protein is Probable intron-encoded endonuclease aI3 (aI3).